A 130-amino-acid polypeptide reads, in one-letter code: Probable 4-amino-4-deoxy-L-arabinose-phosphoundecaprenol flippase subunit ArnF (130 aa).

Topologically, residues 1 to 4 (MRGY) are cytoplasmic. Residues 5–25 (AWGAASVLLVTLAQLLMKWGM) form a helical membrane-spanning segment. Residues 26–47 (AQIPLMSFADVTLNLFMQYWLP) lie on the Periplasmic side of the membrane. Residues 48–68 (LVVVSGGIFGYALSMLCWFFA) form a helical membrane-spanning segment. At 69-77 (LHHLPLNRA) the chain is on the cytoplasmic side. Residues 78-98 (YPLLSVSYALVYLAAVILPWF) traverse the membrane as a helical segment. Residue asparagine 99 is a topological domain, periplasmic. A helical membrane pass occupies residues 100–120 (ESATLLKTLGTLFILFGVWLI). The Cytoplasmic segment spans residues 121–130 (NSQAKVKTPQ).

The protein belongs to the ArnF family. In terms of assembly, heterodimer of ArnE and ArnF.

The protein localises to the cell inner membrane. Its pathway is bacterial outer membrane biogenesis; lipopolysaccharide biosynthesis. Its function is as follows. Translocates 4-amino-4-deoxy-L-arabinose-phosphoundecaprenol (alpha-L-Ara4N-phosphoundecaprenol) from the cytoplasmic to the periplasmic side of the inner membrane. This Serratia proteamaculans (strain 568) protein is Probable 4-amino-4-deoxy-L-arabinose-phosphoundecaprenol flippase subunit ArnF.